The sequence spans 224 residues: Protein YiiM (224 aa).

In terms of domain architecture, MOSC spans 26–163; the sequence is IQVDGELMLT…VSADAPLELV (138 aa).

In terms of assembly, monomer.

The sequence is that of Protein YiiM (yiiM) from Escherichia coli (strain K12).